The chain runs to 420 residues: D-tagatose-1,6-bisphosphate aldolase subunit GatZ (420 aa).

It belongs to the GatZ/KbaZ family. GatZ subfamily. As to quaternary structure, forms a complex with GatY.

The protein operates within carbohydrate metabolism; D-tagatose 6-phosphate degradation; D-glyceraldehyde 3-phosphate and glycerone phosphate from D-tagatose 6-phosphate: step 2/2. Functionally, component of the tagatose-1,6-bisphosphate aldolase GatYZ that is required for full activity and stability of the Y subunit. Could have a chaperone-like function for the proper and stable folding of GatY. When expressed alone, GatZ does not show any aldolase activity. Is involved in the catabolism of galactitol. The protein is D-tagatose-1,6-bisphosphate aldolase subunit GatZ of Escherichia coli O139:H28 (strain E24377A / ETEC).